We begin with the raw amino-acid sequence, 585 residues long: ATP-dependent lipid A-core flippase (585 aa).

6 consecutive transmembrane segments (helical) span residues 25–45 (FLAA…FPAI), 63–83 (WLFY…FGFL), 127–146 (IAYD…TSLI), 150–170 (LSIV…TLIT), 250–270 (QSPL…GVAL), and 277–297 (QTTV…MAPL). The ABC transmembrane type-1 domain maps to 26 to 309 (LAALACMGVA…VTDVNAPIQR (284 aa)). One can recognise an ABC transporter domain in the interval 341–577 (VEFDGVTFTY…DGLYARLYRM (237 aa)). 375-382 (GPSGSGKT) contributes to the ATP binding site.

Belongs to the ABC transporter superfamily. Lipid exporter (TC 3.A.1.106) family. In terms of assembly, homodimer.

It is found in the cell inner membrane. The catalysed reaction is ATP + H2O + lipid A-core oligosaccharideSide 1 = ADP + phosphate + lipid A-core oligosaccharideSide 2.. Its function is as follows. Involved in lipopolysaccharide (LPS) biosynthesis. Translocates lipid A-core from the inner to the outer leaflet of the inner membrane. Transmembrane domains (TMD) form a pore in the inner membrane and the ATP-binding domain (NBD) is responsible for energy generation. This chain is ATP-dependent lipid A-core flippase, found in Dechloromonas aromatica (strain RCB).